The chain runs to 375 residues: 23S rRNA (uracil(747)-C(5))-methyltransferase RlmC (375 aa).

Cys3, Cys11, Cys14, and Cys87 together coordinate [4Fe-4S] cluster. S-adenosyl-L-methionine contacts are provided by Gln212, Phe241, Glu262, and Asn307. Cys334 (nucleophile) is an active-site residue.

Belongs to the class I-like SAM-binding methyltransferase superfamily. RNA M5U methyltransferase family. RlmC subfamily.

It catalyses the reaction uridine(747) in 23S rRNA + S-adenosyl-L-methionine = 5-methyluridine(747) in 23S rRNA + S-adenosyl-L-homocysteine + H(+). Its function is as follows. Catalyzes the formation of 5-methyl-uridine at position 747 (m5U747) in 23S rRNA. This Escherichia coli O139:H28 (strain E24377A / ETEC) protein is 23S rRNA (uracil(747)-C(5))-methyltransferase RlmC.